Consider the following 175-residue polypeptide: ATP synthase subunit delta (175 aa).

It belongs to the ATPase delta chain family. In terms of assembly, F-type ATPases have 2 components, F(1) - the catalytic core - and F(0) - the membrane proton channel. F(1) has five subunits: alpha(3), beta(3), gamma(1), delta(1), epsilon(1). F(0) has three main subunits: a(1), b(2) and c(10-14). The alpha and beta chains form an alternating ring which encloses part of the gamma chain. F(1) is attached to F(0) by a central stalk formed by the gamma and epsilon chains, while a peripheral stalk is formed by the delta and b chains.

It localises to the cell membrane. F(1)F(0) ATP synthase produces ATP from ADP in the presence of a proton or sodium gradient. F-type ATPases consist of two structural domains, F(1) containing the extramembraneous catalytic core and F(0) containing the membrane proton channel, linked together by a central stalk and a peripheral stalk. During catalysis, ATP synthesis in the catalytic domain of F(1) is coupled via a rotary mechanism of the central stalk subunits to proton translocation. In terms of biological role, this protein is part of the stalk that links CF(0) to CF(1). It either transmits conformational changes from CF(0) to CF(1) or is implicated in proton conduction. The protein is ATP synthase subunit delta of Brevibacillus brevis (strain 47 / JCM 6285 / NBRC 100599).